Consider the following 187-residue polypeptide: MAAKFIILLALFALSQASVVRRDAPLANFLQDLEKRAADIQKTFSEQFQAISNSKNVQDVNKAVKESSDVVLKQLSTLSSSLQSALTDANGKAKEALEQTRQNLEKTAEELRRAHPDVEKQANQLRDKLQAAVQSTLQETQKLAKEVAANMEQTNEKLAPKIKEAFEDFVKQAEAVQKKVHDAATKQ.

The signal sequence occupies residues 1-17 (MAAKFIILLALFALSQA). Residues 18 to 22 (SVVRR) constitute a propeptide that is removed on maturation.

The protein belongs to the insect apolipophorin-3 family. Equilibrium between a soluble monomer and a bound lipoprotein form. Apolipophorin-3 associates with lipophorin during lipid loading until each particle contains 9 or 14 molecules of apolipophorin-3. In terms of tissue distribution, hemolymph.

The protein resides in the secreted. Its function is as follows. Assists in the loading of diacylglycerol, generated from triacylglycerol stores in the fat body through the action of adipokinetic hormone, into lipophorin, the hemolymph lipoprotein. It increases the lipid carrying capacity of lipophorin by covering the expanding hydrophobic surface resulting from diacylglycerol uptake. It thus plays a critical role in the transport of lipids during flight in several species of insects. The chain is Apolipophorin-3 from Hyphantria cunea (Fall webworm moth).